A 668-amino-acid polypeptide reads, in one-letter code: Probable potassium transport system protein Kup (668 aa).

12 helical membrane-spanning segments follow: residues 17–37 (GILV…LYVM), 59–79 (VSLI…VIAL), 104–124 (IIPA…TPAV), 148–168 (TIIV…QRFG), 175–195 (AFGP…LMNF), 221–241 (LGLF…ALYS), 256–276 (PYIK…LLTV), 299–319 (ILVF…QALI), 350–370 (MYIP…VLAF), 380–400 (YGLS…FYLL), 403–423 (IPAW…VVFF), and 430–450 (FFHG…IMII).

The protein belongs to the HAK/KUP transporter (TC 2.A.72) family.

It is found in the cell membrane. It carries out the reaction K(+)(in) + H(+)(in) = K(+)(out) + H(+)(out). Functionally, transport of potassium into the cell. Likely operates as a K(+):H(+) symporter. This is Probable potassium transport system protein Kup from Enterococcus faecalis (strain ATCC 700802 / V583).